Here is a 601-residue protein sequence, read N- to C-terminus: METISNIFHNDPLPPLGARANQSIKLRKFIISPYDSRYRTWETFLLVLVVYSAWICPFELAYLRNLSWKVSLVDNIIDSFFAIDIILTFFLAYLDQKSYLLVDDPKRIVARYFSSWFLFDVCSTIPYQLLGQIFKKHENGLAYRLLSMLRLWRLRRLSELFARLEKDIRLNYYWIRCTKLISVTLFAVHCSGCFNYLIADRYPNPARTWIGAAIPNYRSQNLWVRYVTAIYWSITTLTTTGYGDLHAENQREMLFSICYMLFNLGLTAYLIGNMTNLVVQGSCRTRNFRDTIHAASQFAARNQLPGHIKDEMLSHICLRYKTEGLKQKETLDSLPKGIRSSIACNLFLPVIEKVYLFHGVSFTCMIQLVTEMEAEYYPPREVVILQNEAPRDVYILVSGAVEERVEIDGTEKVQEVLCNGEIFGEIGVICSIPQPCAFHTIKVSQLLRLNTAVLKNIIKENSDDRRVILNNLSQKMNQDHRFSTEVMEKSLQMMHQHFGEYNRCSALNQDNEKNELKANNGHSMALEWKRVTIHMYSQRNKRPEAPLAKVINLPGSLDKLFAIACQKFNNYRLTKLVNPEFAEIDDITVIRDGDHLFFMEI.

Residues Met-1–Glu-42 are Cytoplasmic-facing. Residues Thr-43–Leu-63 form a helical membrane-spanning segment. Over Arg-64–Ser-71 the chain is Extracellular. Residues Leu-72 to Ala-92 form a helical membrane-spanning segment. Over Tyr-93 to Tyr-112 the chain is Cytoplasmic. The chain crosses the membrane as a helical span at residues Phe-113 to Ile-133. Residues Phe-134 to Arg-144 are Extracellular-facing. A helical; Voltage-sensor transmembrane segment spans residues Leu-145–Glu-165. Over Lys-166–Lys-179 the chain is Cytoplasmic. Residues Leu-180–Asp-200 traverse the membrane as a helical segment. At Arg-201–Val-227 the chain is on the extracellular side. An intramembrane region (pore-forming) is located at residues Thr-228–Ala-247. The Extracellular segment spans residues Glu-248 to Arg-251. The helical transmembrane segment at Glu-252–Gly-272 threads the bilayer. Residues Asn-273 to Ile-601 lie on the Cytoplasmic side of the membrane. Leu-356–Lys-475 serves as a coordination point for a nucleoside 3',5'-cyclic phosphate. Residues Arg-530–Ile-601 enclose the KHA domain.

This sequence belongs to the potassium channel family. Plant (TC 1.A.1.4) subfamily.

It is found in the membrane. Probable inward-rectifying potassium channel. Assuming opened or closed conformations in response to the voltage difference across the membrane, the channel is activated by hyperpolarization. This is Potassium channel KAT2 from Oryza sativa subsp. japonica (Rice).